A 347-amino-acid chain; its full sequence is Quinolinate synthase (347 aa).

The iminosuccinate site is built by histidine 47 and serine 68. Cysteine 113 contacts [4Fe-4S] cluster. Iminosuccinate-binding positions include 139-141 (YAN) and serine 156. Cysteine 200 is a [4Fe-4S] cluster binding site. Residues 226-228 (HPE) and threonine 243 each bind iminosuccinate. Cysteine 297 is a binding site for [4Fe-4S] cluster.

This sequence belongs to the quinolinate synthase family. Type 1 subfamily. [4Fe-4S] cluster is required as a cofactor.

It is found in the cytoplasm. The enzyme catalyses iminosuccinate + dihydroxyacetone phosphate = quinolinate + phosphate + 2 H2O + H(+). Its pathway is cofactor biosynthesis; NAD(+) biosynthesis; quinolinate from iminoaspartate: step 1/1. In terms of biological role, catalyzes the condensation of iminoaspartate with dihydroxyacetone phosphate to form quinolinate. This chain is Quinolinate synthase, found in Escherichia coli O127:H6 (strain E2348/69 / EPEC).